The primary structure comprises 202 residues: UPF0301 protein Meso_0753 (202 aa).

This sequence belongs to the UPF0301 (AlgH) family.

The polypeptide is UPF0301 protein Meso_0753 (Chelativorans sp. (strain BNC1)).